Consider the following 362-residue polypeptide: Outer membrane porin protein OmpD (362 aa).

An N-terminal signal peptide occupies residues 1–21 (MKLKLVAVAVTSLLAAGVVNA).

This sequence belongs to the Gram-negative porin family. As to quaternary structure, homotrimer.

Its subcellular location is the cell outer membrane. In terms of biological role, forms pores that allow passive diffusion of small molecules across the outer membrane. This chain is Outer membrane porin protein OmpD (ompD), found in Salmonella choleraesuis (strain SC-B67).